The chain runs to 388 residues: N5-carboxyaminoimidazole ribonucleotide synthase (388 aa).

ATP contacts are provided by residues Lys105, Lys140, 174-177 (ESFV), Glu182, and 267-268 (NE). Residues 109–297 (RHFLQNLGLP…QFALQLQAVT (189 aa)) form the ATP-grasp domain.

It belongs to the PurK/PurT family. Homodimer.

The enzyme catalyses 5-amino-1-(5-phospho-beta-D-ribosyl)imidazole + hydrogencarbonate + ATP = 5-carboxyamino-1-(5-phospho-D-ribosyl)imidazole + ADP + phosphate + 2 H(+). The protein operates within purine metabolism; IMP biosynthesis via de novo pathway; 5-amino-1-(5-phospho-D-ribosyl)imidazole-4-carboxylate from 5-amino-1-(5-phospho-D-ribosyl)imidazole (N5-CAIR route): step 1/2. Catalyzes the ATP-dependent conversion of 5-aminoimidazole ribonucleotide (AIR) and HCO(3)(-) to N5-carboxyaminoimidazole ribonucleotide (N5-CAIR). This chain is N5-carboxyaminoimidazole ribonucleotide synthase, found in Synechocystis sp. (strain ATCC 27184 / PCC 6803 / Kazusa).